A 254-amino-acid polypeptide reads, in one-letter code: MEEQTFISKKVGVLPARWGSVRFPGKPLAMILGKSLIQRTYENIIQSETLDKVVVATDDQRIMDHVLDFGGACLMTSPECANGTERMAETVSRYFPEAEIMVNIQGDEPCLRHTVVDALVRKLEEHPEIQMVTPVAQTTDSHEILTNQKVKCVFDKNGKALYFSRSPIPHILKKETPIYLHIGVYAFRRSALFSYIASAPSPLSQAEDLEQLRVLEHGGSIHVCVVEAKSPSVDYPEDISKVEEYLTCHSSASF.

Belongs to the KdsB family.

The protein resides in the cytoplasm. The enzyme catalyses 3-deoxy-alpha-D-manno-oct-2-ulosonate + CTP = CMP-3-deoxy-beta-D-manno-octulosonate + diphosphate. The protein operates within nucleotide-sugar biosynthesis; CMP-3-deoxy-D-manno-octulosonate biosynthesis; CMP-3-deoxy-D-manno-octulosonate from 3-deoxy-D-manno-octulosonate and CTP: step 1/1. Its pathway is bacterial outer membrane biogenesis; lipopolysaccharide biosynthesis. Functionally, activates KDO (a required 8-carbon sugar) for incorporation into bacterial lipopolysaccharide in Gram-negative bacteria. This chain is 3-deoxy-manno-octulosonate cytidylyltransferase, found in Chlamydia abortus (strain DSM 27085 / S26/3) (Chlamydophila abortus).